Here is an 811-residue protein sequence, read N- to C-terminus: Exocyst complex component 6B (811 aa).

The stretch at 50 to 119 (MEKLETRIRN…LVIAMEELKQ (70 aa)) forms a coiled coil. The segment at 260-280 (STSPKSEQDSGILDVEDEEDD) is disordered.

It belongs to the SEC15 family. As to quaternary structure, the exocyst complex is composed of SEC3, SEC5, SEC6, SEC8, SEC10, SEC15, EXO70 and EXO84.

In terms of biological role, component of the exocyst complex involved in the docking of exocytic vesicles with fusion sites on the plasma membrane. The polypeptide is Exocyst complex component 6B (EXOC6B) (Homo sapiens (Human)).